Here is a 546-residue protein sequence, read N- to C-terminus: Chaperonin GroEL (546 aa).

Residues 29-32 (TLGP), Lys-50, 86-90 (DGTTT), Gly-414, and Asp-494 contribute to the ATP site. Residues 525-546 (KKESAAPAMPGHDGMGGMGGMM) are disordered. The span at 537–546 (DGMGGMGGMM) shows a compositional bias: gly residues.

This sequence belongs to the chaperonin (HSP60) family. Forms a cylinder of 14 subunits composed of two heptameric rings stacked back-to-back. Interacts with the co-chaperonin GroES.

It is found in the cytoplasm. The enzyme catalyses ATP + H2O + a folded polypeptide = ADP + phosphate + an unfolded polypeptide.. Together with its co-chaperonin GroES, plays an essential role in assisting protein folding. The GroEL-GroES system forms a nano-cage that allows encapsulation of the non-native substrate proteins and provides a physical environment optimized to promote and accelerate protein folding. This Bdellovibrio bacteriovorus (strain ATCC 15356 / DSM 50701 / NCIMB 9529 / HD100) protein is Chaperonin GroEL.